The primary structure comprises 591 residues: L-fucose isomerase (591 aa).

Active-site proton acceptor residues include E337 and D361. Positions 337, 361, and 528 each coordinate Mn(2+).

This sequence belongs to the L-fucose isomerase family. In terms of assembly, homohexamer. Requires Mn(2+) as cofactor.

It localises to the cytoplasm. It carries out the reaction L-fucose = L-fuculose. It participates in carbohydrate degradation; L-fucose degradation; L-lactaldehyde and glycerone phosphate from L-fucose: step 1/3. Its function is as follows. Converts the aldose L-fucose into the corresponding ketose L-fuculose. The chain is L-fucose isomerase from Escherichia coli O6:K15:H31 (strain 536 / UPEC).